The sequence spans 173 residues: Development-specific protein S (173 aa).

2 consecutive Beta/gamma crystallin 'Greek key' domains span residues 2–46 and 48–86; these read ANIT…KVPP and VKAILYQNDGFAGDQIEVVANAEELGPLNNNVSSIRVIS. Residues Tyr8, Asn37, Thr38, Ser40, Gln54, Asn77, Asn78, and Ser80 each coordinate Ca(2+). Residues 87-90 form a connecting peptide region; sequence VPVQ. 2 consecutive Beta/gamma crystallin 'Greek key' domains span residues 91-135 and 136-173; these read PRAR…KPQG and LAVVLFKNDNFSGDTLPVNSDAPTLGAMNNNTSSIRIS.

It belongs to the beta/gamma-crystallin family.

In terms of biological role, protein S, induced in large amounts during fruiting body formation, assembles on the surface of myxospores in the presence of calcium ions. The polypeptide is Development-specific protein S (tps) (Myxococcus xanthus).